An 843-amino-acid chain; its full sequence is Excretory canal abnormal protein 6 (843 aa).

Disordered regions lie at residues 54–135 (QLKD…EKKT), 568–601 (TLES…PAKT), 748–767 (TPLS…MTAE), and 773–843 (TMKP…PKWV). 2 stretches are compositionally biased toward pro residues: residues 66-76 (TPPPPPPPPPL) and 83-103 (APPP…PPPI). Residues 127 to 512 (FLPKKEKKTK…KEEKKETQTT (386 aa)) enclose the FH2 domain. 2 stretches are compositionally biased toward polar residues: residues 776–792 (PSVS…TSSH) and 819–830 (IPQSPTVTSSAR).

The protein belongs to the formin homology family. As to expression, expressed in the excretory cell and mostly accumulates at the tip of the excretory cell canals.

Its subcellular location is the cytoplasm. The protein localises to the cytoskeleton. Its function is as follows. Constitutively active protein required for microtubule and F-actin growth, structural maintenance and organization during excretory cell tubulogenesis. The chain is Excretory canal abnormal protein 6 from Caenorhabditis elegans.